Reading from the N-terminus, the 198-residue chain is dTTP/UTP pyrophosphatase (198 aa).

Residue Asp75 is the Proton acceptor of the active site.

This sequence belongs to the Maf family. YhdE subfamily. A divalent metal cation is required as a cofactor.

The protein localises to the cytoplasm. The enzyme catalyses dTTP + H2O = dTMP + diphosphate + H(+). It carries out the reaction UTP + H2O = UMP + diphosphate + H(+). Nucleoside triphosphate pyrophosphatase that hydrolyzes dTTP and UTP. May have a dual role in cell division arrest and in preventing the incorporation of modified nucleotides into cellular nucleic acids. The sequence is that of dTTP/UTP pyrophosphatase from Wolbachia sp. subsp. Brugia malayi (strain TRS).